Reading from the N-terminus, the 163-residue chain is Photosystem II extrinsic protein V (163 aa).

Residues 1–26 (MFRRLIGVVVATVLLSFQLLVGSATA) form the signal peptide. Cysteine 63, cysteine 66, histidine 67, and histidine 118 together coordinate heme c.

It belongs to the cytochrome c family. PsbV subfamily. In terms of assembly, PSII is composed of 1 copy each of membrane proteins PsbA, PsbB, PsbC, PsbD, PsbE, PsbF, PsbH, PsbI, PsbJ, PsbK, PsbL, PsbM, PsbT, PsbX, PsbY, PsbZ, Psb30/Ycf12, peripheral proteins PsbO, CyanoQ (PsbQ), PsbU, PsbV and a large number of cofactors. It forms dimeric complexes. Heme c serves as cofactor.

Its subcellular location is the cellular thylakoid membrane. One of the extrinsic, lumenal subunits of photosystem II (PSII). PSII is a light-driven water plastoquinone oxidoreductase, using light energy to abstract electrons from H(2)O, generating a proton gradient subsequently used for ATP formation. The extrinsic proteins stabilize the structure of photosystem II oxygen-evolving complex (OEC), the ion environment of oxygen evolution and protect the OEC against heat-induced inactivation. Low-potential cytochrome c that plays a role in the OEC of PSII. In Nostoc punctiforme (strain ATCC 29133 / PCC 73102), this protein is Photosystem II extrinsic protein V.